A 202-amino-acid polypeptide reads, in one-letter code: Small ribosomal subunit protein uS4 (202 aa).

The region spanning 91–168 is the S4 RNA-binding domain; it reads SMLSSVLYNS…QKVPDYLEVD (78 aa).

It belongs to the universal ribosomal protein uS4 family. In terms of assembly, part of the 30S ribosomal subunit. Contacts protein S5. The interaction surface between S4 and S5 is involved in control of translational fidelity.

Functionally, one of the primary rRNA binding proteins, it binds directly to 16S rRNA where it nucleates assembly of the body of the 30S subunit. In terms of biological role, with S5 and S12 plays an important role in translational accuracy. In Ehrlichia ruminantium (strain Welgevonden), this protein is Small ribosomal subunit protein uS4.